A 279-amino-acid polypeptide reads, in one-letter code: Oxygen-dependent coproporphyrinogen-III oxidase (279 aa).

Ser-102 is a substrate binding site. The a divalent metal cation site is built by His-106 and His-116. The Proton donor role is filled by His-116. 118–120 is a substrate binding site; sequence NTR. His-149 and His-179 together coordinate a divalent metal cation. The tract at residues 244–279 is important for dimerization; the sequence is YVEFNLLYDRGTKFGLMTDGNVEAILMSLPPEVKFN.

It belongs to the aerobic coproporphyrinogen-III oxidase family. As to quaternary structure, homodimer. The cofactor is a divalent metal cation.

It localises to the cytoplasm. The enzyme catalyses coproporphyrinogen III + O2 + 2 H(+) = protoporphyrinogen IX + 2 CO2 + 2 H2O. The protein operates within porphyrin-containing compound metabolism; protoporphyrin-IX biosynthesis; protoporphyrinogen-IX from coproporphyrinogen-III (O2 route): step 1/1. Functionally, involved in the heme biosynthesis. Catalyzes the aerobic oxidative decarboxylation of propionate groups of rings A and B of coproporphyrinogen-III to yield the vinyl groups in protoporphyrinogen-IX. This chain is Oxygen-dependent coproporphyrinogen-III oxidase, found in Rickettsia peacockii (strain Rustic).